Here is a 103-residue protein sequence, read N- to C-terminus: Protein FMC1 homolog (103 aa).

It belongs to the FMC1 family.

The chain is Protein FMC1 homolog from Nematostella vectensis (Starlet sea anemone).